Consider the following 363-residue polypeptide: uncharacterized protein (363 aa).

29–36 contributes to the ATP binding site; sequence GSINSGKT.

The protein belongs to the archaeal ATPase family.

This is an uncharacterized protein from Methanocaldococcus jannaschii (strain ATCC 43067 / DSM 2661 / JAL-1 / JCM 10045 / NBRC 100440) (Methanococcus jannaschii).